Reading from the N-terminus, the 350-residue chain is Mitochondrial glycine transporter (350 aa).

Solcar repeat units follow at residues serine 23–cysteine 107, leucine 134–asparagine 218, and serine 250–lysine 334. Helical transmembrane passes span phenylalanine 29–glutamine 54, glycine 82–isoleucine 108, leucine 140–glutamate 165, glycine 193–lysine 216, valine 254–leucine 280, and glycine 309–valine 327.

This sequence belongs to the mitochondrial carrier (TC 2.A.29) family. SLC25A38 subfamily.

The protein localises to the mitochondrion inner membrane. It catalyses the reaction glycine(in) = glycine(out). In terms of biological role, mitochondrial glycine transporter that imports glycine into the mitochondrial matrix. Plays an important role in providing glycine for the first enzymatic step in heme biosynthesis, the condensation of glycine with succinyl-CoA to produce 5-aminolevulinate (ALA) in the mitochondrial matrix. This Ajellomyces capsulatus (strain NAm1 / WU24) (Darling's disease fungus) protein is Mitochondrial glycine transporter.